The chain runs to 487 residues: Serine/threonine-protein kinase 4 (487 aa).

Met1 carries the N-acetylmethionine modification. At Thr3 the chain carries Phosphothreonine. Residues 30 to 281 (FDVLEKLGEG…ATQLLQHPFV (252 aa)) form the Protein kinase domain. ATP contacts are provided by residues 36–44 (LGEGSYGSV) and Lys59. The active-site Proton acceptor is the Asp149. Thr183 bears the Phosphothreonine; by autocatalysis mark. Ser265 bears the Phosphoserine mark. Residues 290–310 (LRDLINEAMDVKLKRQESQQR) are a coiled coil. Basic and acidic residues predominate over residues 303 to 312 (KRQESQQREV). The tract at residues 303-332 (KRQESQQREVDQDDEENSEEDEMDSGTMVR) is disordered. A compositionally biased stretch (acidic residues) spans 313–326 (DQDDEENSEEDEMD). Ser320 is subject to Phosphoserine. A phosphothreonine mark is found at Thr340 and Thr367. Thr387 is modified (phosphothreonine; by PKB/AKT1). 2 positions are modified to phosphoserine: Ser410 and Ser414. At Tyr433 the chain carries Phosphotyrosine. In terms of domain architecture, SARAH spans 433–480 (YEFLKSWTVEDLQKRLLALDPMMEQEIEEIRQKYQSKRQPILDAIEAK).

It belongs to the protein kinase superfamily. STE Ser/Thr protein kinase family. STE20 subfamily. Homodimer; mediated via the coiled-coil region. Interacts with NORE1, which inhibits autoactivation. Interacts with and stabilizes SAV1. Interacts with RASSF1. Interacts with FOXO3. Interacts with RASSF2 (via SARAH domain). Interacts with AR, PKB/AKT1, TNNI3 and SIRT1. Interacts with DLG5 (via PDZ domain 3). Interacts with MARK3 in the presence of DLG5. Interacts with SCRIB in the presence of DLG5. It depends on Mg(2+) as a cofactor. Post-translationally, autophosphorylated on serine and threonine residues. Phosphorylation at Thr-387 by PKB/AKT1, leads to inhibition of its: kinase activity, nuclear translocation and autophosphorylation at Thr-183. It also diminishes its cleavage by caspases and its ability to phosphorylate FOXO3. In terms of processing, proteolytically cleaved by caspase-3 during apoptosis at Asp-326 and Asp-349 resulting in a 37 kDa or a 39 kDa subunit respectively. The 39 kDa subunit is further cleaved into the 37 kDa form. Proteolytic cleavage results in kinase activation and nuclear translocation of the truncated form (MST1/N). It is less likely that cleavage at Asp-349 is a prerequisite for activation as this site is not conserved in the murine ortholog. In terms of tissue distribution, expressed in prostate cancer and levels increase from the normal to the malignant state (at protein level). Ubiquitously expressed.

The protein resides in the cytoplasm. It localises to the nucleus. It catalyses the reaction L-seryl-[protein] + ATP = O-phospho-L-seryl-[protein] + ADP + H(+). It carries out the reaction L-threonyl-[protein] + ATP = O-phospho-L-threonyl-[protein] + ADP + H(+). Its activity is regulated as follows. Inhibited by the C-terminal non-catalytic region. Activated by caspase-cleavage. Full activation also requires homodimerization and autophosphorylation of Thr-183. Activated by RASSF1 which acts by preventing its dephosphorylation. In terms of biological role, stress-activated, pro-apoptotic kinase which, following caspase-cleavage, enters the nucleus and induces chromatin condensation followed by internucleosomal DNA fragmentation. Key component of the Hippo signaling pathway which plays a pivotal role in organ size control and tumor suppression by restricting proliferation and promoting apoptosis. The core of this pathway is composed of a kinase cascade wherein STK3/MST2 and STK4/MST1, in complex with its regulatory protein SAV1, phosphorylates and activates LATS1/2 in complex with its regulatory protein MOB1, which in turn phosphorylates and inactivates YAP1 oncoprotein and WWTR1/TAZ. Phosphorylation of YAP1 by LATS2 inhibits its translocation into the nucleus to regulate cellular genes important for cell proliferation, cell death, and cell migration. STK3/MST2 and STK4/MST1 are required to repress proliferation of mature hepatocytes, to prevent activation of facultative adult liver stem cells (oval cells), and to inhibit tumor formation. Phosphorylates 'Ser-14' of histone H2B (H2BS14ph) during apoptosis. Phosphorylates FOXO3 upon oxidative stress, which results in its nuclear translocation and cell death initiation. Phosphorylates MOBKL1A, MOBKL1B and RASSF2. Phosphorylates TNNI3 (cardiac Tn-I) and alters its binding affinity to TNNC1 (cardiac Tn-C) and TNNT2 (cardiac Tn-T). Phosphorylates FOXO1 on 'Ser-212' and regulates its activation and stimulates transcription of PMAIP1 in a FOXO1-dependent manner. Phosphorylates SIRT1 and inhibits SIRT1-mediated p53/TP53 deacetylation, thereby promoting p53/TP53 dependent transcription and apoptosis upon DNA damage. Acts as an inhibitor of PKB/AKT1. Phosphorylates AR on 'Ser-650' and suppresses its activity by intersecting with PKB/AKT1 signaling and antagonizing formation of AR-chromatin complexes. This Homo sapiens (Human) protein is Serine/threonine-protein kinase 4.